Here is a 908-residue protein sequence, read N- to C-terminus: Translation initiation factor IF-2 (908 aa).

Disordered stretches follow at residues 52–229 and 241–316; these read QSHG…AEEA and AGQY…SAQH. The span at 65–84 shows a compositional bias: polar residues; that stretch reads KSKTTSTARVTGSSGKSKSV. Composition is skewed to basic and acidic residues over residues 94–108, 120–138, 176–185, 193–229, 270–280, and 294–303; these read FEKP…ELAA, AAKD…EERQ, IEVKPKEQPK, PKVE…AEEA, SFEKERREIKR, and KNQDEREIKN. In terms of domain architecture, tr-type G spans 409–578; it reads TRPPVVTIMG…SLQAELMELE (170 aa). The segment at 418–425 is G1; that stretch reads GHVDHGKT. 418–425 serves as a coordination point for GTP; sequence GHVDHGKT. Residues 443–447 form a G2 region; sequence GITQH. A G3 region spans residues 464 to 467; that stretch reads DTPG. Residues 464–468 and 518–521 contribute to the GTP site; these read DTPGH and NKMD. The interval 518 to 521 is G4; sequence NKMD. The interval 554–556 is G5; it reads SAK.

This sequence belongs to the TRAFAC class translation factor GTPase superfamily. Classic translation factor GTPase family. IF-2 subfamily.

The protein localises to the cytoplasm. In terms of biological role, one of the essential components for the initiation of protein synthesis. Protects formylmethionyl-tRNA from spontaneous hydrolysis and promotes its binding to the 30S ribosomal subunits. Also involved in the hydrolysis of GTP during the formation of the 70S ribosomal complex. This chain is Translation initiation factor IF-2, found in Psychrobacter arcticus (strain DSM 17307 / VKM B-2377 / 273-4).